The following is a 447-amino-acid chain: Dirigent protein 10 (447 aa).

Positions 1-21 (MAGQKILSLLVIALVVTFAAA) are cleaved as a signal peptide. The segment covering 74-85 (SGSTGSGLGAGT) has biased composition (gly residues). Positions 74–123 (SGSTGSGLGAGTGSIPSSGSGPGLLPTASSVPGSLAGGGSGSLPTTGSAT) are disordered. Residues 86–107 (GSIPSSGSGPGLLPTASSVPGS) show a composition bias toward low complexity.

This sequence belongs to the plant dirigent protein family. Homodimer. As to expression, in roots, mostly detected in root endodermis and quiescent center, and, to a lower extent, in root stele and cortex. Expressed in root vascular cylinder, flowers, siliques, cotyledon and leaf veins, and leaf margins. Present in the basal region of rosette leaf trichomes and in developing xylem.

It localises to the secreted. The protein localises to the extracellular space. Its subcellular location is the apoplast. Functionally, dirigent proteins impart stereoselectivity on the phenoxy radical-coupling reaction, yielding optically active lignans from two molecules of coniferyl alcohol in the biosynthesis of lignans, flavonolignans, and alkaloids and thus plays a central role in plant secondary metabolism. Regulates suberin accumulation in roots. This is Dirigent protein 10 (DIR10) from Arabidopsis thaliana (Mouse-ear cress).